An 81-amino-acid chain; its full sequence is Insulin (81 aa).

3 disulfide bridges follow: C7/C67, C19/C80, and C66/C71. Positions 33-58 (DVEQPLVNGPLHGEVGELPFQHEEYQ) are cleaved as a propeptide — c peptide.

Belongs to the insulin family. In terms of assembly, heterodimer of a B chain and an A chain linked by two disulfide bonds.

It is found in the secreted. Its function is as follows. Insulin decreases blood glucose concentration. It increases cell permeability to monosaccharides, amino acids and fatty acids. It accelerates glycolysis, the pentose phosphate cycle, and glycogen synthesis in liver. The protein is Insulin (INS) of Anas platyrhynchos (Mallard).